A 209-amino-acid polypeptide reads, in one-letter code: Orotate phosphoribosyltransferase (209 aa).

Residues Arg-96, Lys-100, His-102, and 122–130 each bind 5-phospho-alpha-D-ribose 1-diphosphate; that span reads EDLISTGKS. Ser-126 serves as a coordination point for orotate.

It belongs to the purine/pyrimidine phosphoribosyltransferase family. PyrE subfamily. As to quaternary structure, homodimer. Mg(2+) serves as cofactor.

The enzyme catalyses orotidine 5'-phosphate + diphosphate = orotate + 5-phospho-alpha-D-ribose 1-diphosphate. It functions in the pathway pyrimidine metabolism; UMP biosynthesis via de novo pathway; UMP from orotate: step 1/2. Functionally, catalyzes the transfer of a ribosyl phosphate group from 5-phosphoribose 1-diphosphate to orotate, leading to the formation of orotidine monophosphate (OMP). This is Orotate phosphoribosyltransferase from Coxiella burnetii (strain RSA 493 / Nine Mile phase I).